Reading from the N-terminus, the 1353-residue chain is DNA-directed RNA polymerase subunit beta' (1353 aa).

Residues 1–117 (MSDNRLFTSV…AFQKLNDLFK (117 aa)) form a unknown region. Residues 118–1353 (LYNHFPSISS…SELTKKTNQN (1236 aa)) are DNA-directed RNA polymerase subunit beta'. The Zn(2+) site is built by Cys189, Cys191, Cys203, and Cys206. Asp578, Asp580, and Asp582 together coordinate Mg(2+).

It belongs to the RNA polymerase beta' chain family. In terms of assembly, the RNAP catalytic core consists of 2 alpha, 1 beta, 1 beta' and 1 omega subunit. When a sigma factor is associated with the core the holoenzyme is formed, which can initiate transcription. It depends on Mg(2+) as a cofactor. The cofactor is Zn(2+).

It catalyses the reaction RNA(n) + a ribonucleoside 5'-triphosphate = RNA(n+1) + diphosphate. In terms of biological role, DNA-dependent RNA polymerase catalyzes the transcription of DNA into RNA using the four ribonucleoside triphosphates as substrates. The chain is DNA-directed RNA polymerase subunit beta' from Aster yellows witches'-broom phytoplasma (strain AYWB).